The following is a 254-amino-acid chain: Ribonuclease HII (254 aa).

Residues 70–254 (RYICGIDEVG…ASFIKNLTSC (185 aa)) enclose the RNase H type-2 domain. A divalent metal cation-binding residues include Asp76, Glu77, and Asp168.

The protein belongs to the RNase HII family. Requires Mn(2+) as cofactor. Mg(2+) serves as cofactor.

Its subcellular location is the cytoplasm. It carries out the reaction Endonucleolytic cleavage to 5'-phosphomonoester.. Endonuclease that specifically degrades the RNA of RNA-DNA hybrids. This is Ribonuclease HII from Lachnoclostridium phytofermentans (strain ATCC 700394 / DSM 18823 / ISDg) (Clostridium phytofermentans).